The sequence spans 381 residues: Alanine racemase, catabolic (381 aa).

The active-site Proton acceptor; specific for D-alanine is the K55. The residue at position 55 (K55) is an N6-(pyridoxal phosphate)lysine. Residue R154 coordinates substrate. The active-site Proton acceptor; specific for L-alanine is Y276. M322 contacts substrate.

Belongs to the alanine racemase family. Requires pyridoxal 5'-phosphate as cofactor.

The enzyme catalyses L-alanine = D-alanine. In terms of biological role, isomerizes L-alanine to D-alanine which is then oxidized to pyruvate by DadA. In Mesorhizobium japonicum (strain LMG 29417 / CECT 9101 / MAFF 303099) (Mesorhizobium loti (strain MAFF 303099)), this protein is Alanine racemase, catabolic (dadB).